The following is a 1198-amino-acid chain: Chromosome partition protein Smc (1198 aa).

Position 40-47 (40-47 (PNGSGKSN)) interacts with ATP. 2 coiled-coil regions span residues 175–211 (ITKY…GQLG) and 322–524 (LGEQ…LAKK). Residues 534–647 (CGTLADLLQV…VTDMEAATRV (114 aa)) form the SMC hinge domain. Residues 687 to 1042 (SREIQELRQE…AELDKTMSER (356 aa)) adopt a coiled-coil conformation. Positions 785 to 818 (AEEQSKLTDSIQEAQEALARQEEKNRQASREMEQ) are disordered. Residues 803–818 (ARQEEKNRQASREMEQ) are compositionally biased toward basic and acidic residues.

It belongs to the SMC family. In terms of assembly, homodimer.

It is found in the cytoplasm. Functionally, required for chromosome condensation and partitioning. The chain is Chromosome partition protein Smc from Desulfitobacterium hafniense (strain Y51).